The following is a 170-amino-acid chain: Transcriptional repressor NrdR (170 aa).

A zinc finger spans residues 3 to 34; it reads CPFCRHPDSRVVDSRVTDDGTAIRRRRSCPEC. The ATP-cone domain occupies 46-136; the sequence is LSVIKRSGVI…VYRGFESLED (91 aa). The segment at 151–170 is disordered; sequence ERSETVERGRPVPSRGVDDR.

The protein belongs to the NrdR family. Zn(2+) is required as a cofactor.

Functionally, negatively regulates transcription of bacterial ribonucleotide reductase nrd genes and operons by binding to NrdR-boxes. In Acidothermus cellulolyticus (strain ATCC 43068 / DSM 8971 / 11B), this protein is Transcriptional repressor NrdR.